An 87-amino-acid polypeptide reads, in one-letter code: NAD(P)H-quinone oxidoreductase subunit O (87 aa).

Basic and acidic residues predominate over residues 1–10 (MSEQTGKVDD). Residues 1-23 (MSEQTGKVDDSQSPPKVQKKLRK) are disordered.

Belongs to the complex I NdhO subunit family. As to quaternary structure, NDH-1 can be composed of about 15 different subunits; different subcomplexes with different compositions have been identified which probably have different functions.

Its subcellular location is the cellular thylakoid membrane. The catalysed reaction is a plastoquinone + NADH + (n+1) H(+)(in) = a plastoquinol + NAD(+) + n H(+)(out). It carries out the reaction a plastoquinone + NADPH + (n+1) H(+)(in) = a plastoquinol + NADP(+) + n H(+)(out). Its function is as follows. NDH-1 shuttles electrons from an unknown electron donor, via FMN and iron-sulfur (Fe-S) centers, to quinones in the respiratory and/or the photosynthetic chain. The immediate electron acceptor for the enzyme in this species is believed to be plastoquinone. Couples the redox reaction to proton translocation, and thus conserves the redox energy in a proton gradient. Cyanobacterial NDH-1 also plays a role in inorganic carbon-concentration. The sequence is that of NAD(P)H-quinone oxidoreductase subunit O from Prochlorococcus marinus (strain NATL2A).